Reading from the N-terminus, the 773-residue chain is Photosystem I P700 chlorophyll a apoprotein A1 (773 aa).

The segment at 1–27 is disordered; sequence MTISPPERGEKAKGAAPTPYDQPVDRD. The next 8 helical transmembrane spans lie at 80-103, 166-189, 205-229, 315-333, 375-398, 414-440, 462-484, and 564-582; these read IFSA…FHGA, LMAL…YHYH, LQHH…HIGA, ISHH…GHMW, WHGQ…HHMY, LGLF…IAMI, AIIS…LYIH, and LMIH…LILL. The [4Fe-4S] cluster site is built by cysteine 606 and cysteine 615. The next 2 helical transmembrane spans lie at 622-643 and 687-709; these read HVFL…HFSW and ISMY…MFLF. Histidine 698 serves as a coordination point for divinylchlorophyll a'. 2 residues coordinate divinyl chlorophyll a: methionine 706 and tyrosine 714. Tryptophan 715 is a phylloquinone binding site. The chain crosses the membrane as a helical span at residues 747–767; it reads AVGVAHFLLGGIATTWAFFHA.

This sequence belongs to the PsaA/PsaB family. As to quaternary structure, the PsaA/B heterodimer binds the P700 divinyl chlorophyll special pair and subsequent electron acceptors. PSI consists of a core antenna complex that captures photons, and an electron transfer chain that converts photonic excitation into a charge separation. The cyanobacterial PSI reaction center is composed of one copy each of PsaA,B,C,D,E,F,I,J,K,L,M and X, and forms trimeric complexes. The cofactor is PSI electron transfer chain: 5 divinyl chlorophyll a, 1 divinyl chlorophyll a', 2 phylloquinones and 3 4Fe-4S clusters. PSI core antenna: 90 divinyl chlorophyll a, 22 carotenoids, 3 phospholipids and 1 galactolipid. P700 is a divinyl chlorophyll a/divinyl chlorophyll a' dimer, A0 is one or more divinylchlorophyll a, A1 is one or both phylloquinones and FX is a shared 4Fe-4S iron-sulfur center..

It localises to the cellular thylakoid membrane. It carries out the reaction reduced [plastocyanin] + hnu + oxidized [2Fe-2S]-[ferredoxin] = oxidized [plastocyanin] + reduced [2Fe-2S]-[ferredoxin]. Its function is as follows. PsaA and PsaB bind P700, the primary electron donor of photosystem I (PSI), as well as the electron acceptors A0, A1 and FX. PSI is a plastocyanin/cytochrome c6-ferredoxin oxidoreductase, converting photonic excitation into a charge separation, which transfers an electron from the donor P700 chlorophyll pair to the spectroscopically characterized acceptors A0, A1, FX, FA and FB in turn. Oxidized P700 is reduced on the lumenal side of the thylakoid membrane by plastocyanin or cytochrome c6. In Prochlorococcus marinus (strain SARG / CCMP1375 / SS120), this protein is Photosystem I P700 chlorophyll a apoprotein A1.